Consider the following 207-residue polypeptide: Claudin-11 (207 aa).

Residue methionine 1 is a topological domain, cytoplasmic. The helical transmembrane segment at valine 2–isoleucine 22 threads the bilayer. Residues valine 23–arginine 82 are Extracellular-facing. Residues alanine 83 to leucine 103 form a helical membrane-spanning segment. At proline 104 to leucine 122 the chain is on the cytoplasmic side. A helical transmembrane segment spans residues alanine 123–valine 143. The Extracellular segment spans residues cysteine 144–serine 157. Residues leucine 158–cysteine 178 form a helical membrane-spanning segment. Topologically, residues serine 179 to valine 207 are cytoplasmic. A phosphoserine mark is found at serine 193, serine 194, serine 197, and serine 198.

This sequence belongs to the claudin family. In terms of assembly, interacts with tetraspanin-3/TSPAN3. Interacts with OCLN.

The protein localises to the cell junction. Its subcellular location is the tight junction. It localises to the cell membrane. Functionally, plays a major role in tight junction-specific obliteration of the intercellular space, through calcium-independent cell-adhesion activity. The protein is Claudin-11 (Cldn11) of Rattus norvegicus (Rat).